A 49-amino-acid polypeptide reads, in one-letter code: Small, acid-soluble spore protein O (49 aa).

The disordered stretch occupies residues 23–49 (AGYNEKFSNEPLTEAQRQNNKKRKKNQ).

It belongs to the SspO family.

The protein localises to the spore core. The sequence is that of Small, acid-soluble spore protein O from Geobacillus thermodenitrificans (strain NG80-2).